Here is a 151-residue protein sequence, read N- to C-terminus: uncharacterized protein (151 aa).

4Fe-4S ferredoxin-type domains follow at residues 4–32 (KIIVLNPEKCTKCYDCINICKEIHGESRV), 33–63 (RKVDGIPIFCMQCENAPCKEICPVDAIYLKD), and 64–93 (GIPIVDKERCIACGMCAIACPIGAIFIKNR). The [4Fe-4S] cluster site is built by Cys-13, Cys-16, Cys-19, Cys-23, Cys-42, Cys-45, Cys-50, Cys-54, Cys-73, Cys-76, Cys-79, Cys-83, Cys-98, Cys-101, Cys-111, and Cys-115.

[4Fe-4S] cluster is required as a cofactor.

This is an uncharacterized protein from Methanocaldococcus jannaschii (strain ATCC 43067 / DSM 2661 / JAL-1 / JCM 10045 / NBRC 100440) (Methanococcus jannaschii).